The chain runs to 260 residues: Ribonuclease 3 (260 aa).

The interval 1-24 is disordered; that stretch reads MAQSSKYQRKPRSGERKRSQRRLE. The segment covering 12–24 has biased composition (basic and acidic residues); that stretch reads RSGERKRSQRRLE. Residues 33–162 enclose the RNase III domain; the sequence is FDDLLVRTGL…FIGALYMDQG (130 aa). Glu75 serves as a coordination point for Mg(2+). Asp79 is an active-site residue. Positions 148 and 151 each coordinate Mg(2+). Glu151 is a catalytic residue. The DRBM domain maps to 188-257; it reads DFKSQLQEFV…AKQALLALNQ (70 aa).

Belongs to the ribonuclease III family. In terms of assembly, homodimer. The cofactor is Mg(2+).

Its subcellular location is the cytoplasm. It catalyses the reaction Endonucleolytic cleavage to 5'-phosphomonoester.. Functionally, digests double-stranded RNA. Involved in the processing of primary rRNA transcript to yield the immediate precursors to the large and small rRNAs (23S and 16S). Processes some mRNAs, and tRNAs when they are encoded in the rRNA operon. Processes pre-crRNA and tracrRNA of type II CRISPR loci if present in the organism. This Shouchella clausii (strain KSM-K16) (Alkalihalobacillus clausii) protein is Ribonuclease 3.